A 181-amino-acid chain; its full sequence is Capsid protein VP4 (181 aa).

The protein localises to the virion. VP4 self-assembles to form, together with capsid protein VP10, an icosahedral caspid of 87 nm in diameter, with a T=43 symmetry and composed of 420 hexamers and 12 pentamers. VP4 proteins arrange into hexons, while VP10 proteins form the pentameric densities located at the 5-fold axes in the virion. The stoichiometry of VP4:VP10 is 42:1. In Sulfolobus (SPV1), this protein is Capsid protein VP4.